A 385-amino-acid polypeptide reads, in one-letter code: 1-deoxy-D-xylulose 5-phosphate reductoisomerase (385 aa).

Positions 13, 14, 15, 16, 40, and 122 each coordinate NADPH. A 1-deoxy-D-xylulose 5-phosphate-binding site is contributed by Lys123. NADPH is bound at residue Glu124. Asp148 is a binding site for Mn(2+). Residues Ser149, Glu150, Ser177, and His200 each contribute to the 1-deoxy-D-xylulose 5-phosphate site. Residue Glu150 participates in Mn(2+) binding. Gly206 contacts NADPH. Positions 213, 218, 219, and 222 each coordinate 1-deoxy-D-xylulose 5-phosphate. Glu222 provides a ligand contact to Mn(2+).

Belongs to the DXR family. The cofactor is Mg(2+). Mn(2+) serves as cofactor.

The enzyme catalyses 2-C-methyl-D-erythritol 4-phosphate + NADP(+) = 1-deoxy-D-xylulose 5-phosphate + NADPH + H(+). The protein operates within isoprenoid biosynthesis; isopentenyl diphosphate biosynthesis via DXP pathway; isopentenyl diphosphate from 1-deoxy-D-xylulose 5-phosphate: step 1/6. Functionally, catalyzes the NADPH-dependent rearrangement and reduction of 1-deoxy-D-xylulose-5-phosphate (DXP) to 2-C-methyl-D-erythritol 4-phosphate (MEP). In Francisella tularensis subsp. novicida (strain U112), this protein is 1-deoxy-D-xylulose 5-phosphate reductoisomerase.